Consider the following 121-residue polypeptide: Large ribosomal subunit protein uL22 (121 aa).

Belongs to the universal ribosomal protein uL22 family. In terms of assembly, part of the 50S ribosomal subunit.

Functionally, this protein binds specifically to 23S rRNA; its binding is stimulated by other ribosomal proteins, e.g. L4, L17, and L20. It is important during the early stages of 50S assembly. It makes multiple contacts with different domains of the 23S rRNA in the assembled 50S subunit and ribosome. In terms of biological role, the globular domain of the protein is located near the polypeptide exit tunnel on the outside of the subunit, while an extended beta-hairpin is found that lines the wall of the exit tunnel in the center of the 70S ribosome. The sequence is that of Large ribosomal subunit protein uL22 from Beutenbergia cavernae (strain ATCC BAA-8 / DSM 12333 / CCUG 43141 / JCM 11478 / NBRC 16432 / NCIMB 13614 / HKI 0122).